We begin with the raw amino-acid sequence, 284 residues long: Tropomyosin-1 (284 aa).

The stretch at 1–284 forms a coiled coil; that stretch reads MDAIKKKMLA…DSTFAELAGY (284 aa). The interval 103–131 is disordered; it reads EERLQSATEKLEEASKAADESERGRKVLE.

Belongs to the tropomyosin family. As to quaternary structure, homodimer.

In terms of biological role, tropomyosin, in association with the troponin complex, plays a central role in the calcium dependent regulation of muscle contraction. This chain is Tropomyosin-1, found in Biomphalaria glabrata (Bloodfluke planorb).